The primary structure comprises 399 residues: 3-methyl-2-oxobutanoate hydroxymethyltransferase 2, mitochondrial (399 aa).

The transit peptide at 1-90 directs the protein to the mitochondrion; it reads MSFSRLLTPR…ARRVTLATLR (90 aa). The Mg(2+) site is built by D125 and D164. 3-methyl-2-oxobutanoate-binding positions include 125–126, D164, and K194; that span reads DS. E196 serves as a coordination point for Mg(2+). The active-site Proton acceptor is the E264.

It belongs to the PanB family. Mg(2+) serves as cofactor.

The protein localises to the mitochondrion. The enzyme catalyses 3-methyl-2-oxobutanoate + (6R)-5,10-methylene-5,6,7,8-tetrahydrofolate + H2O = 2-dehydropantoate + (6S)-5,6,7,8-tetrahydrofolate. The protein operates within cofactor biosynthesis; (R)-pantothenate biosynthesis; (R)-pantoate from 3-methyl-2-oxobutanoate: step 1/2. Its function is as follows. Catalyzes the reversible reaction in which hydroxymethyl group from 5,10-methylenetetrahydrofolate is transferred onto alpha-ketoisovalerate to form ketopantoate. This Oryza sativa subsp. japonica (Rice) protein is 3-methyl-2-oxobutanoate hydroxymethyltransferase 2, mitochondrial (KPHMT2).